Reading from the N-terminus, the 199-residue chain is Probable chemoreceptor glutamine deamidase CheD (199 aa).

The protein belongs to the CheD family.

The enzyme catalyses L-glutaminyl-[protein] + H2O = L-glutamyl-[protein] + NH4(+). Functionally, probably deamidates glutamine residues to glutamate on methyl-accepting chemotaxis receptors (MCPs), playing an important role in chemotaxis. This is Probable chemoreceptor glutamine deamidase CheD from Cereibacter sphaeroides (strain ATCC 17029 / ATH 2.4.9) (Rhodobacter sphaeroides).